The following is a 137-amino-acid chain: Large ribosomal subunit protein uL16 (137 aa).

It belongs to the universal ribosomal protein uL16 family. In terms of assembly, part of the 50S ribosomal subunit.

In terms of biological role, binds 23S rRNA and is also seen to make contacts with the A and possibly P site tRNAs. This is Large ribosomal subunit protein uL16 from Wolbachia pipientis wMel.